Here is a 580-residue protein sequence, read N- to C-terminus: (3S,6E)-nerolidol synthase 1, chloroplastic (580 aa).

The transit peptide at 1–31 (MASSSWAFFKVFNPQIAPKSISHIGQSDLMQ) directs the protein to the chloroplast. Mg(2+) contacts are provided by Asp334, Asp338, Asp478, Ser482, and Glu486. The DDXXD motif signature appears at 334–338 (DDIFD).

Belongs to the terpene synthase family. Tpsg subfamily. The cofactor is Mg(2+). Mn(2+) is required as a cofactor.

The protein localises to the plastid. It localises to the chloroplast. It carries out the reaction (2E,6E)-farnesyl diphosphate + H2O = (3S,6E)-nerolidol + diphosphate. Its pathway is secondary metabolite biosynthesis; terpenoid biosynthesis. In terms of biological role, involved in monoterpene (C10) and sesquiterpene (C15) biosynthesis. Converts geranyl diphosphate (GPP) into S-linalool and farnesyl diphosphate (FPP) into (3S)-E-nerolidol. Probably not expressed in wild strawberry species. This is (3S,6E)-nerolidol synthase 1, chloroplastic from Fragaria vesca (Woodland strawberry).